A 345-amino-acid chain; its full sequence is Phosphoribosylformylglycinamidine cyclo-ligase (345 aa).

Belongs to the AIR synthase family.

The protein localises to the cytoplasm. The catalysed reaction is 2-formamido-N(1)-(5-O-phospho-beta-D-ribosyl)acetamidine + ATP = 5-amino-1-(5-phospho-beta-D-ribosyl)imidazole + ADP + phosphate + H(+). It functions in the pathway purine metabolism; IMP biosynthesis via de novo pathway; 5-amino-1-(5-phospho-D-ribosyl)imidazole from N(2)-formyl-N(1)-(5-phospho-D-ribosyl)glycinamide: step 2/2. This is Phosphoribosylformylglycinamidine cyclo-ligase from Bifidobacterium longum subsp. infantis (strain ATCC 15697 / DSM 20088 / JCM 1222 / NCTC 11817 / S12).